We begin with the raw amino-acid sequence, 541 residues long: MAKDIKFSADARESMVRGVDILADTVKVTLGPKGRNVVLEKAFGSPLITNDGVTIAKEIELEDHFENMGAKLVSEVASKTNDIAGDGTTTATVLTQAIVREGLKNVTAGANPIGIRRGIEAATTTAVEALKAVAQPVSGKEAIAQVAAVSSRSEKVGDYISEAMERVGNDGVITIEESRGMETELEVVEGMQFDRGYLSQYMVTDNEKMVADLENPFILITDKKISNIQDILPLLEEVLKTSRPLLIIADDVDGEALPTLVLNKIRGTFNVVAVKAPGFGDRRKAMLEDIAVLTGGTVITEDLGLELKDATMAALGQAAKVTVDKDNTVIVEGAGSSEAIANRVNLIKSQLETTTSEFDREKLQERLAKLAGGVAVIKVGAATETELKEMKLRIEDALNATRAAVEEGIVAGGGTALINVMDKVAALELDGDAATGRNIVLRALEEPVRQIAYNAGYEGSVIIDKLKNSAAGVGFNAATGEWVDMIATGIIDPVKVTRSALQNAASVAGLILTTEAVVATKPEPAAPAMPQGMDPGMMGGF.

ATP-binding positions include 29–32 (TLGP), 86–90 (DGTTT), glycine 413, 476–478 (NAA), and aspartate 492.

It belongs to the chaperonin (HSP60) family. As to quaternary structure, forms a cylinder of 14 subunits composed of two heptameric rings stacked back-to-back. Interacts with the co-chaperonin GroES.

Its subcellular location is the cytoplasm. The enzyme catalyses ATP + H2O + a folded polypeptide = ADP + phosphate + an unfolded polypeptide.. In terms of biological role, together with its co-chaperonin GroES, plays an essential role in assisting protein folding. The GroEL-GroES system forms a nano-cage that allows encapsulation of the non-native substrate proteins and provides a physical environment optimized to promote and accelerate protein folding. The polypeptide is Chaperonin GroEL (Streptococcus equi subsp. zooepidemicus (strain H70)).